The primary structure comprises 492 residues: Ketol-acid reductoisomerase (NADP(+)) (492 aa).

One can recognise a KARI N-terminal Rossmann domain in the interval 14-208 (LDQLGKCRFM…GGHRAGVLQS (195 aa)). NADP(+)-binding positions include 45–48 (CGAQ), R68, R76, S78, and 108–110 (DKQ). H132 is a catalytic residue. G158 contributes to the NADP(+) binding site. KARI C-terminal knotted domains are found at residues 209 to 344 (SFVA…NAPQ) and 345 to 485 (FDGK…MKDM). Mg(2+) contacts are provided by D217, E221, E389, and E393. S414 lines the substrate pocket.

This sequence belongs to the ketol-acid reductoisomerase family. Mg(2+) serves as cofactor.

The enzyme catalyses (2R)-2,3-dihydroxy-3-methylbutanoate + NADP(+) = (2S)-2-acetolactate + NADPH + H(+). It catalyses the reaction (2R,3R)-2,3-dihydroxy-3-methylpentanoate + NADP(+) = (S)-2-ethyl-2-hydroxy-3-oxobutanoate + NADPH + H(+). Its pathway is amino-acid biosynthesis; L-isoleucine biosynthesis; L-isoleucine from 2-oxobutanoate: step 2/4. The protein operates within amino-acid biosynthesis; L-valine biosynthesis; L-valine from pyruvate: step 2/4. Its function is as follows. Involved in the biosynthesis of branched-chain amino acids (BCAA). Catalyzes an alkyl-migration followed by a ketol-acid reduction of (S)-2-acetolactate (S2AL) to yield (R)-2,3-dihydroxy-isovalerate. In the isomerase reaction, S2AL is rearranged via a Mg-dependent methyl migration to produce 3-hydroxy-3-methyl-2-ketobutyrate (HMKB). In the reductase reaction, this 2-ketoacid undergoes a metal-dependent reduction by NADPH to yield (R)-2,3-dihydroxy-isovalerate. The sequence is that of Ketol-acid reductoisomerase (NADP(+)) from Pectobacterium atrosepticum (strain SCRI 1043 / ATCC BAA-672) (Erwinia carotovora subsp. atroseptica).